The following is a 348-amino-acid chain: D-erythrose-4-phosphate dehydrogenase (348 aa).

NAD(+) contacts are provided by residues 12–13 (RI) and arginine 81. Substrate is bound by residues 154 to 156 (SCT), arginine 200, 213 to 214 (TK), and arginine 236. Cysteine 155 functions as the Nucleophile in the catalytic mechanism. Asparagine 318 lines the NAD(+) pocket.

This sequence belongs to the glyceraldehyde-3-phosphate dehydrogenase family. Epd subfamily. Homotetramer.

It is found in the cytoplasm. The enzyme catalyses D-erythrose 4-phosphate + NAD(+) + H2O = 4-phospho-D-erythronate + NADH + 2 H(+). It functions in the pathway cofactor biosynthesis; pyridoxine 5'-phosphate biosynthesis; pyridoxine 5'-phosphate from D-erythrose 4-phosphate: step 1/5. Catalyzes the NAD-dependent conversion of D-erythrose 4-phosphate to 4-phosphoerythronate. The protein is D-erythrose-4-phosphate dehydrogenase of Salmonella paratyphi A (strain ATCC 9150 / SARB42).